The chain runs to 649 residues: MSNCLQLNTSCVGCGSQSDLYGSSCRHMTLCLKCGRTMAQNKSKCHECGTVVTRLIREYNVRAAAPTDKNYFIGRFVTGLPNFKKGSENKWSLRKDIPQGRQFTDAQREKLKNKPWILEDETGQFQYQGHLEGSQSATYYLLVMQNKEFVAIPAGSWYNFNKVAQYKQLTLEEAEEKMKNRRKTADGYQRWMMKAANNGPALFGEVDNEKESGGTSGGGGRGRKKSSGGDEEEGNVSDRGDEDEEEEASRKSRLGLNRKSNDDDDEEGPRGGDLDMDDDDIEKGDDWEHEEIFTDDDEAVGNDPEEREDLLAPEIPAPPEIKQDEDDEENEEEEGGLSKSGKELKKLLGKANGLDESDEDDDDDSDDEEETNYGTVTNSKQKEAAKEEPVDNAPAKPAPSGPPRGTPPAKPSKGKRKLNDGDSKKPSSSVQKKVKTENDPKSSLKEERANTVSKSNTPTKAVKAEPASAPASSSSAATGPVTEDEIRAVLMEKKQVTTQDLVSRFKARLKTKEDKNAFANILRKISKIQKNAGSQNFVVLREKCQPKPGKRESRVNKLNIRSNLQPRKMELVTEDEIRKVLMEKKQLTTLELVMRFKERLTTTEDKDSFSHILKKIAKLQKNPGSEKFVVVLRDNVTPLASDLTRLSIS.

The segment at 201–480 is disordered; sequence ALFGEVDNEK…ASSSSAATGP (280 aa). Composition is skewed to acidic residues over residues 229-247, 274-283, 293-308, 323-335, and 355-371; these read GDEE…EEEE, LDMDDDDIEK, FTDD…EERE, QDED…EEEG, and DESD…EEET. Over residues 380-389 the composition is skewed to basic and acidic residues; that stretch reads KQKEAAKEEP. Pro residues predominate over residues 396–410; it reads KPAPSGPPRGTPPAK. Basic and acidic residues predominate over residues 434 to 449; that stretch reads VKTENDPKSSLKEERA. Polar residues predominate over residues 450-459; that stretch reads NTVSKSNTPT. The span at 466–477 shows a compositional bias: low complexity; that stretch reads PASAPASSSSAA. The required for CPL3 and CPL4 binding stretch occupies residues 466-543; sequence PASAPASSSS…SQNFVVLREK (78 aa).

The protein belongs to the TFIIF alpha subunit family. As to quaternary structure, heterodimer of an alpha and a beta subunit. Interacts with CPL3 and CPL4.

Its subcellular location is the nucleus. In terms of biological role, TFIIF is a general transcription initiation factor that binds to RNA polymerase II and helps to recruit it to the initiation complex in collaboration with TFIIB. It promotes transcription elongation. In Arabidopsis thaliana (Mouse-ear cress), this protein is Transcription initiation factor IIF subunit alpha (RAP74).